Reading from the N-terminus, the 389-residue chain is Chalcone synthase 1 (389 aa).

Residue Cys164 is part of the active site.

This sequence belongs to the thiolase-like superfamily. Chalcone/stilbene synthases family.

The catalysed reaction is (E)-4-coumaroyl-CoA + 3 malonyl-CoA + 3 H(+) = 2',4,4',6'-tetrahydroxychalcone + 3 CO2 + 4 CoA. The protein operates within secondary metabolite biosynthesis; flavonoid biosynthesis. The primary product of this enzyme is 4,2',4',6'-tetrahydroxychalcone (also termed naringenin-chalcone or chalcone) which can under specific conditions spontaneously isomerize into naringenin. This is Chalcone synthase 1 (CHS1) from Daucus carota (Wild carrot).